We begin with the raw amino-acid sequence, 361 residues long: MLTQVSATQADSNQASQASQALLDTLYQGHALTRSQSETLFASIVAGDMDPVAMAGMLVALKMRGETTAEITGAADALRSAAKPFPRSADSISTGVLDIVGTGGDGFNTINISTTAAFVAAAAGAKVAKHGNRGVSSKSGSSDLLTHCGIGLTMSPKAASACLDTLGLSFLFAPHYHEGVRHAVPVRQALKTRTIFNILGPLINPAKPEFMLLGVYSPKLLAPIVNVLNALGVKRAMVVYGSGLDEVALHGDTQVAELNNGDIRFYHLTPEELGVERADLNLLTGGEPSDNALITKAILQGKGEAAQRDAVAINAGCALYISGISDSVQAGTKLALATLKTGKAFDVLTQLAEASQTEAQG.

5-phospho-alpha-D-ribose 1-diphosphate-binding positions include Gly101, Gly104–Asp105, Thr109, Asn111–Thr114, Lys129–Ser137, and Ser141. Gly101 contacts anthranilate. Mg(2+) is bound at residue Ser113. Asn132 contributes to the anthranilate binding site. Arg187 contributes to the anthranilate binding site. Residues Asp245 and Glu246 each contribute to the Mg(2+) site.

This sequence belongs to the anthranilate phosphoribosyltransferase family. In terms of assembly, homodimer. The cofactor is Mg(2+).

It carries out the reaction N-(5-phospho-beta-D-ribosyl)anthranilate + diphosphate = 5-phospho-alpha-D-ribose 1-diphosphate + anthranilate. The protein operates within amino-acid biosynthesis; L-tryptophan biosynthesis; L-tryptophan from chorismate: step 2/5. Catalyzes the transfer of the phosphoribosyl group of 5-phosphorylribose-1-pyrophosphate (PRPP) to anthranilate to yield N-(5'-phosphoribosyl)-anthranilate (PRA). The sequence is that of Anthranilate phosphoribosyltransferase from Shewanella denitrificans (strain OS217 / ATCC BAA-1090 / DSM 15013).